Consider the following 390-residue polypeptide: Queuine tRNA-ribosyltransferase (390 aa).

The active-site Proton acceptor is Asp92. Residues 92–96 (DSGGF), Asp146, Gln195, and Gly222 each bind substrate. The tract at residues 253–259 (GVGTPED) is RNA binding. Asp272 (nucleophile) is an active-site residue. The tract at residues 277–281 (TRNAR) is RNA binding; important for wobble base 34 recognition. Residues Cys310, Cys312, Cys315, and His354 each contribute to the Zn(2+) site.

This sequence belongs to the queuine tRNA-ribosyltransferase family. As to quaternary structure, homodimer. Within each dimer, one monomer is responsible for RNA recognition and catalysis, while the other monomer binds to the replacement base PreQ1. It depends on Zn(2+) as a cofactor.

It catalyses the reaction 7-aminomethyl-7-carbaguanine + guanosine(34) in tRNA = 7-aminomethyl-7-carbaguanosine(34) in tRNA + guanine. It functions in the pathway tRNA modification; tRNA-queuosine biosynthesis. Its function is as follows. Catalyzes the base-exchange of a guanine (G) residue with the queuine precursor 7-aminomethyl-7-deazaguanine (PreQ1) at position 34 (anticodon wobble position) in tRNAs with GU(N) anticodons (tRNA-Asp, -Asn, -His and -Tyr). Catalysis occurs through a double-displacement mechanism. The nucleophile active site attacks the C1' of nucleotide 34 to detach the guanine base from the RNA, forming a covalent enzyme-RNA intermediate. The proton acceptor active site deprotonates the incoming PreQ1, allowing a nucleophilic attack on the C1' of the ribose to form the product. After dissociation, two additional enzymatic reactions on the tRNA convert PreQ1 to queuine (Q), resulting in the hypermodified nucleoside queuosine (7-(((4,5-cis-dihydroxy-2-cyclopenten-1-yl)amino)methyl)-7-deazaguanosine). The chain is Queuine tRNA-ribosyltransferase from Verminephrobacter eiseniae (strain EF01-2).